The following is a 663-amino-acid chain: DNA ligase (663 aa).

NAD(+) is bound by residues 31–35, 80–81, and E109; these read DSEYD and SL. The active-site N6-AMP-lysine intermediate is the K111. 4 residues coordinate NAD(+): R132, E166, K282, and K306. 4 residues coordinate Zn(2+): C400, C403, C418, and C423. The BRCT domain occupies 585-663; it reads ELHPVFGEKT…EQMMVDALRN (79 aa).

This sequence belongs to the NAD-dependent DNA ligase family. LigA subfamily. It depends on Mg(2+) as a cofactor. Mn(2+) is required as a cofactor.

The enzyme catalyses NAD(+) + (deoxyribonucleotide)n-3'-hydroxyl + 5'-phospho-(deoxyribonucleotide)m = (deoxyribonucleotide)n+m + AMP + beta-nicotinamide D-nucleotide.. In terms of biological role, DNA ligase that catalyzes the formation of phosphodiester linkages between 5'-phosphoryl and 3'-hydroxyl groups in double-stranded DNA using NAD as a coenzyme and as the energy source for the reaction. It is essential for DNA replication and repair of damaged DNA. This chain is DNA ligase, found in Macrococcus caseolyticus (strain JCSC5402) (Macrococcoides caseolyticum).